A 164-amino-acid polypeptide reads, in one-letter code: Interferon gamma (164 aa).

A signal peptide spans 1-19; that stretch reads MTCQTYNLFVLSVIMIYYG. 2 N-linked (GlcNAc...) asparagine glycosylation sites follow: asparagine 42 and asparagine 61.

The protein belongs to the type II (or gamma) interferon family. Homodimer.

The protein resides in the secreted. Its function is as follows. Produced by lymphocytes activated by specific antigens or mitogens. IFN-gamma, in addition to having antiviral activity, has important immunoregulatory functions. It is a potent activator of macrophages, it has antiproliferative effects on transformed cells and it can potentiate the antiviral and antitumor effects of the type I interferons. This Numida meleagris (Helmeted guineafowl) protein is Interferon gamma (IFNG).